Consider the following 530-residue polypeptide: Glutamyl-tRNA reductase 2, chloroplastic (530 aa).

A chloroplast-targeting transit peptide spans Met-1 to Ala-64. Substrate-binding positions include Thr-134–Arg-137, Ser-194, Glu-199–Gln-201, and Gln-205. Cys-135 acts as the Nucleophile in catalysis. Gly-277–Gly-282 is a binding site for NADP(+).

It belongs to the glutamyl-tRNA reductase family. In terms of tissue distribution, expressed in roots and flowers. Detected in leaves, hypocotyls and cotyledons.

It localises to the plastid. Its subcellular location is the chloroplast. The enzyme catalyses (S)-4-amino-5-oxopentanoate + tRNA(Glu) + NADP(+) = L-glutamyl-tRNA(Glu) + NADPH + H(+). The protein operates within porphyrin-containing compound metabolism; protoporphyrin-IX biosynthesis; 5-aminolevulinate from L-glutamyl-tRNA(Glu): step 1/2. It functions in the pathway porphyrin-containing compound metabolism; chlorophyll biosynthesis. Its function is as follows. Catalyzes the NADPH-dependent reduction of glutamyl-tRNA(Glu) to glutamate 1-semialdehyde (GSA). Probably involved in wound-induced supply of heme to defensive hemoproteins outside plastids. The polypeptide is Glutamyl-tRNA reductase 2, chloroplastic (HEMA2) (Arabidopsis thaliana (Mouse-ear cress)).